The following is a 182-amino-acid chain: UPF0397 protein BT9727_2423 (182 aa).

The next 5 membrane-spanning stretches (helical) occupy residues 9-29, 40-60, 71-91, 114-134, and 142-162; these read VVAIGIGSALYGILGLWGFSI, AILTVFGALFGPVAGLLIGLI, WGIWWGWVISSGIIGFTMGFI, ITGLIGIVIAIIFAGAFDIIV, and IVIQVLGATIADVIVFLVLGL.

Belongs to the UPF0397 family.

It is found in the cell membrane. The sequence is that of UPF0397 protein BT9727_2423 from Bacillus thuringiensis subsp. konkukian (strain 97-27).